The primary structure comprises 62 residues: Photosystem II reaction center protein Z (62 aa).

The next 2 helical transmembrane spans lie at 8-28 and 41-61; these read ALVALVLVSFVLVVGVPVAYA and WLGSGVWIALVLLVGLLNFFV.

This sequence belongs to the PsbZ family. As to quaternary structure, PSII is composed of 1 copy each of membrane proteins PsbA, PsbB, PsbC, PsbD, PsbE, PsbF, PsbH, PsbI, PsbJ, PsbK, PsbL, PsbM, PsbT, PsbX, PsbY, PsbZ, Psb30/Ycf12, peripheral proteins PsbO, CyanoQ (PsbQ), PsbU, PsbV and a large number of cofactors. It forms dimeric complexes.

The protein resides in the cellular thylakoid membrane. Its function is as follows. May control the interaction of photosystem II (PSII) cores with the light-harvesting antenna, regulates electron flow through the 2 photosystem reaction centers. PSII is a light-driven water plastoquinone oxidoreductase, using light energy to abstract electrons from H(2)O, generating a proton gradient subsequently used for ATP formation. The protein is Photosystem II reaction center protein Z of Nostoc sp. (strain PCC 7120 / SAG 25.82 / UTEX 2576).